Consider the following 352-residue polypeptide: ADP-ribosylation factor GTPase-activating protein GCS1 (352 aa).

Positions 11 to 127 (RRRLLQLQKI…LTCLCEDRVF (117 aa)) constitute an Arf-GAP domain. The C4-type zinc finger occupies 26–49 (CMDCGAPNPQWATPKFGAFICLEC). Over residues 138–151 (SKLSATSQTAASAT) the composition is skewed to low complexity. 2 disordered regions span residues 138–181 (SKLS…ANFQ) and 196–231 (NQSR…GSSN). Residue Thr-151 is modified to Phosphothreonine. Position 157 is a phosphoserine (Ser-157). Thr-161 is subject to Phosphothreonine. A Phosphoserine modification is found at Ser-168. A compositionally biased stretch (polar residues) spans 168 to 179 (SATPANSSNGAN). The residue at position 170 (Thr-170) is a Phosphothreonine. Ser-260 carries the post-translational modification Phosphoserine. Residues 315-330 (NGNAEDSSTAGNTTHT) are compositionally biased toward polar residues. The segment at 315-352 (NGNAEDSSTAGNTTHTEYQKIDNNDKKNEQDEDKWDDF) is disordered. The segment covering 331–343 (EYQKIDNNDKKNE) has biased composition (basic and acidic residues).

It is found in the cytoplasm. The protein resides in the mitochondrion. Its subcellular location is the perinuclear region. It localises to the golgi apparatus. Its function is as follows. GTPase-activating protein (GAP) for ARF1 and ARF2. Involved in intracellular vesicular transport. Required for transport from the trans-Golgi network. Implicated in the regulation of retrograde transport from the Golgi to the ER and in actin cytoskeletal organization. May be involved in the maintenance of mitochondrial morphology, possibly through organizing the actin cytoskeleton in Saccharomyces. This is ADP-ribosylation factor GTPase-activating protein GCS1 (GCS1) from Saccharomyces cerevisiae (strain ATCC 204508 / S288c) (Baker's yeast).